Here is a 143-residue protein sequence, read N- to C-terminus: Putative transcriptional regulatory protein PH0763 (143 aa).

It belongs to the Tfx family.

Putative transcriptional regulator. This chain is Putative transcriptional regulatory protein PH0763, found in Pyrococcus horikoshii (strain ATCC 700860 / DSM 12428 / JCM 9974 / NBRC 100139 / OT-3).